The following is a 360-amino-acid chain: Histidinol-phosphate aminotransferase (360 aa).

Lysine 221 carries the N6-(pyridoxal phosphate)lysine modification.

This sequence belongs to the class-II pyridoxal-phosphate-dependent aminotransferase family. Histidinol-phosphate aminotransferase subfamily. Homodimer. Pyridoxal 5'-phosphate is required as a cofactor.

The enzyme catalyses L-histidinol phosphate + 2-oxoglutarate = 3-(imidazol-4-yl)-2-oxopropyl phosphate + L-glutamate. Its pathway is amino-acid biosynthesis; L-histidine biosynthesis; L-histidine from 5-phospho-alpha-D-ribose 1-diphosphate: step 7/9. This chain is Histidinol-phosphate aminotransferase, found in Desulfitobacterium hafniense (strain Y51).